The chain runs to 359 residues: Putative cyclin-F1-2 (359 aa).

This sequence belongs to the cyclin family. Cyclin F subfamily.

The chain is Putative cyclin-F1-2 (CYCF1-2) from Oryza sativa subsp. japonica (Rice).